The chain runs to 284 residues: Release factor glutamine methyltransferase (284 aa).

Residues 121–125, Asp144, Trp172, and Asn188 each bind S-adenosyl-L-methionine; that span reads GTGTG. 188-191 contacts substrate; sequence NPPY.

It belongs to the protein N5-glutamine methyltransferase family. PrmC subfamily.

It carries out the reaction L-glutaminyl-[peptide chain release factor] + S-adenosyl-L-methionine = N(5)-methyl-L-glutaminyl-[peptide chain release factor] + S-adenosyl-L-homocysteine + H(+). Its function is as follows. Methylates the class 1 translation termination release factors RF1/PrfA and RF2/PrfB on the glutamine residue of the universally conserved GGQ motif. The sequence is that of Release factor glutamine methyltransferase from Aliivibrio fischeri (strain ATCC 700601 / ES114) (Vibrio fischeri).